An 89-amino-acid polypeptide reads, in one-letter code: Putative RING finger protein 121R (89 aa).

Residues 45-78 (CPICLIAKVNTVLECTHVLCSNCVKKINVCPICR) form an RING-type zinc finger.

In Invertebrate iridescent virus 6 (IIV-6), this protein is Putative RING finger protein 121R.